Consider the following 697-residue polypeptide: MFS antiporter QDR3 (697 aa).

The Cytoplasmic portion of the chain corresponds to 1 to 141 (MSHSPNLSPQ…ARDYPNKIKY (141 aa)). The segment at 38–109 (HPIGHHGREQ…KPTSTSIKTN (72 aa)) is disordered. 2 stretches are compositionally biased toward low complexity: residues 53-69 (NTTKTTTTTTNKIHTTT) and 85-99 (DLSSLESQQEQYLSQ). Residues 142–162 (LIVFIIAFASLAGPFGTSVML) traverse the membrane as a helical segment. The Extracellular portion of the chain corresponds to 163 to 180 (PAIDDIVNDLNTNVSTVN). 2 N-linked (GlcNAc...) asparagine glycosylation sites follow: N175 and N180. A helical transmembrane segment spans residues 181 to 201 (VSVGIYLLSLGIFPLWWSSFS). Residues 202–215 (ERFGRRSVYMVSFT) lie on the Cytoplasmic side of the membrane. A helical transmembrane segment spans residues 216–236 (LFVAFSIGTALSPNIAALIVL). Residues 237-240 (RVLQ) lie on the Extracellular side of the membrane. A helical transmembrane segment spans residues 241-261 (GGSSASVQAVGAGTIADLFIP). The Cytoplasmic segment spans residues 262 to 268 (QERGQAM). The chain crosses the membrane as a helical span at residues 269 to 289 (GLYYLGPLAGPFLAPILGGAV). Residues 290-296 (SQAWGWR) are Extracellular-facing. A helical transmembrane segment spans residues 297–317 (ATQWLLMIISACSFVLITFFL). Over 318 to 485 (PETLRRVDTI…SIILLKHPPV (168 aa)) the chain is Cytoplasmic. Residues 338-367 (DNNGSQNEKIHDDFAGADNSSVHDIDGNPI) are disordered. A helical transmembrane segment spans residues 486–506 (VLVISFSAISFAAIYFFNMAI). Residues 507–519 (SYEYARSPYNFSS) are Extracellular-facing. A glycan (N-linked (GlcNAc...) asparagine) is linked at N516. Residues 520 to 540 (VILGLMYIPNSVTYFMASIIG) traverse the membrane as a helical segment. Over 541-565 (GKWNDRLLNRYAQKHGELVPESRLS) the chain is Cytoplasmic. Residues 566 to 586 (WNIVVAIILYPMACLIFGWTI) traverse the membrane as a helical segment. At 587–590 (KYRE) the chain is on the extracellular side. The chain crosses the membrane as a helical span at residues 591-611 (FWVIPLIGTALFGFASMLVIG). Over 612–626 (ATVTYLVDSLPGKGA) the chain is Cytoplasmic. A helical transmembrane segment spans residues 627 to 647 (TGVALNNLIRQILAAIATFIV). Over 648-653 (EPLLRA) the chain is Extracellular. The helical transmembrane segment at 654–674 (IGAGVLFSIIAGILLVSSLVL) threads the bilayer. Topologically, residues 675-697 (LYLKKRGAFFREHYDVMDLYAKL) are cytoplasmic.

This sequence belongs to the major facilitator superfamily. CAR1 family.

Its subcellular location is the cell membrane. In terms of biological role, MFS antiporter that does not display functional linkage as drug transporter and performs functions that significantly affect biofilm development and virulence. No substrate for transport has been identified yet, but plays an important role in the growth in the host. This chain is MFS antiporter QDR3 (QDR3), found in Candida albicans (strain SC5314 / ATCC MYA-2876) (Yeast).